Reading from the N-terminus, the 376-residue chain is Putative aryl-alcohol dehydrogenase AAD14 (376 aa).

The Proton donor role is filled by tyrosine 76. Residue histidine 151 coordinates substrate. 236–246 (DVMGGGRFQSK) contributes to the NADP(+) binding site.

The protein belongs to the aldo/keto reductase family. Aldo/keto reductase 2 subfamily.

The polypeptide is Putative aryl-alcohol dehydrogenase AAD14 (AAD14) (Saccharomyces cerevisiae (strain ATCC 204508 / S288c) (Baker's yeast)).